A 366-amino-acid polypeptide reads, in one-letter code: tRNA/tmRNA (uracil-C(5))-methyltransferase (366 aa).

Positions 190, 218, 223, 239, and 299 each coordinate S-adenosyl-L-methionine. Cys324 serves as the catalytic Nucleophile. The active-site Proton acceptor is Glu358.

Belongs to the class I-like SAM-binding methyltransferase superfamily. RNA M5U methyltransferase family. TrmA subfamily.

The catalysed reaction is uridine(54) in tRNA + S-adenosyl-L-methionine = 5-methyluridine(54) in tRNA + S-adenosyl-L-homocysteine + H(+). The enzyme catalyses uridine(341) in tmRNA + S-adenosyl-L-methionine = 5-methyluridine(341) in tmRNA + S-adenosyl-L-homocysteine + H(+). Its function is as follows. Dual-specificity methyltransferase that catalyzes the formation of 5-methyluridine at position 54 (m5U54) in all tRNAs, and that of position 341 (m5U341) in tmRNA (transfer-mRNA). The polypeptide is tRNA/tmRNA (uracil-C(5))-methyltransferase (Klebsiella pneumoniae (strain 342)).